Reading from the N-terminus, the 259-residue chain is Ribonuclease HII (259 aa).

The region spanning 72-259 (ERIAGIDEAG…PVREALGVQS (188 aa)) is the RNase H type-2 domain. Residues aspartate 78, glutamate 79, and aspartate 170 each coordinate a divalent metal cation.

Belongs to the RNase HII family. The cofactor is Mn(2+). Mg(2+) serves as cofactor.

The protein localises to the cytoplasm. It carries out the reaction Endonucleolytic cleavage to 5'-phosphomonoester.. Functionally, endonuclease that specifically degrades the RNA of RNA-DNA hybrids. This chain is Ribonuclease HII, found in Geobacillus thermodenitrificans (strain NG80-2).